A 409-amino-acid polypeptide reads, in one-letter code: Bone morphogenetic protein 4 (409 aa).

Positions 1-19 (MIPGNRMLMVVLLCQVLLG) are cleaved as a signal peptide. The propeptide occupies 20-293 (GASHASLIPE…ALTRRRRAKR (274 aa)). Ser91 is subject to Phosphoserine. 2 N-linked (GlcNAc...) asparagine glycosylation sites follow: Asn144 and Asn209. Residues 284-308 (ALTRRRRAKRSPKHHPQRARKKNKN) are disordered. Disulfide bonds link Cys309-Cys374, Cys338-Cys406, and Cys342-Cys408. Asn351 and Asn366 each carry an N-linked (GlcNAc...) asparagine glycan.

The protein belongs to the TGF-beta family. Homodimer; disulfide-linked. Interacts with GREM2. Part of a complex consisting of TWSG1 and CHRD. Interacts with the serine proteases, HTRA1 and HTRA3; the interaction with either inhibits BMP4-mediated signaling. The HTRA protease activity is required for this inhibition. Interacts with SOSTDC1. Interacts with FBN1 (via N-terminal domain) and FBN2. Interacts with type I receptor BMPR1A. Interacts with type II receptor BMPR2. Interacts with FSTL1; this interaction inhibits the activation of the BMP4/Smad1/5/8 signaling pathway. Interacts with TGFBR3.

It localises to the secreted. It is found in the extracellular space. Its subcellular location is the extracellular matrix. Functionally, growth factor of the TGF-beta superfamily that plays essential roles in many developmental processes, including neurogenesis, vascular development, angiogenesis and osteogenesis. Acts in concert with PTHLH/PTHRP to stimulate ductal outgrowth during embryonic mammary development and to inhibit hair follicle induction. Initiates the canonical BMP signaling cascade by associating with type I receptor BMPR1A and type II receptor BMPR2. Once all three components are bound together in a complex at the cell surface, BMPR2 phosphorylates and activates BMPR1A. In turn, BMPR1A propagates signal by phosphorylating SMAD1/5/8 that travel to the nucleus and act as activators and repressors of transcription of target genes. Positively regulates the expression of odontogenic development regulator MSX1 via inducing the IPO7-mediated import of SMAD1 to the nucleus. Required for MSX1-mediated mesenchymal molar tooth bud development beyond the bud stage, via promoting Wnt signaling. Acts as a positive regulator of odontoblast differentiation during mesenchymal tooth germ formation, expression is repressed during the bell stage by MSX1-mediated inhibition of CTNNB1 signaling. Able to induce its own expression in dental mesenchymal cells and also in the neighboring dental epithelial cells via an MSX1-mediated pathway. Can also signal through non-canonical BMP pathways such as ERK/MAP kinase, PI3K/Akt, or SRC cascades. For example, induces SRC phosphorylation which, in turn, activates VEGFR2, leading to an angiogenic response. The polypeptide is Bone morphogenetic protein 4 (Suncus murinus (Asian house shrew)).